The following is a 135-amino-acid chain: MEVLPKALEVDERSPESKDLLPSQTASSLCISSRSESVWTTTPKSNWEIYHKPIIIMSVGAAILLFGVAITCVAYILEEKHKVVQVLRMIGPAFLSLGLMMLVCGLVWVPIIKKKQKQRQKSNFFQSLKFFLLNR.

The tract at residues 1 to 21 (MEVLPKALEVDERSPESKDLL) is disordered. The segment covering 8–19 (LEVDERSPESKD) has biased composition (basic and acidic residues). The next 2 membrane-spanning stretches (helical) occupy residues 54–74 (IIIM…TCVA) and 92–112 (PAFL…VPII).

In terms of assembly, interacts with TRPV1. In terms of tissue distribution, strongly expressed in most dorsal root ganglia (DRG) and trigeminal neurons. Expressed by most peptidergic (CGRP+) and non-peptidergic (IB4+) DRG neurons. Weakly expressed in other parts of the peripheral nervous system (PNS) including sympathetic and enteric neurons. Not expressed in the spinal cord.

The protein localises to the membrane. Regulatory subunit of TRPV1, a molecular sensor of noxious heat and capsaicin. Positively regulates TRPV1 channel activity via phosphatidylinositol 4,5-bisphosphate (PIP2). Binds various phosphoinositide, including phosphatidylinositol 4,5-bisphosphate (PIP2), but not phosphatidylinositol (PI). The protein is Phosphoinositide-interacting protein (Pirt) of Mus musculus (Mouse).